The following is a 1013-amino-acid chain: Hemoglobin-binding protein A (1013 aa).

Positions 1 to 24 (MTNFKFSLLACSIAFALNASTAYA) are cleaved as a signal peptide. 8 tandem repeats follow at residues 26-29 (QPTN), 30-33 (QPTN), 34-37 (QPTN), 38-41 (QPTN), 42-45 (QPTN), 46-49 (QPTN), 50-53 (QPTN), and 54-57 (QPTN). Positions 26–57 (QPTNQPTNQPTNQPTNQPTNQPTNQPTNQPTN) are 8 X 4 AA tandem repeats of Q-P-T-N. Over residues 26–58 (QPTNQPTNQPTNQPTNQPTNQPTNQPTNQPTNQ) the composition is skewed to low complexity. Positions 26–61 (QPTNQPTNQPTNQPTNQPTNQPTNQPTNQPTNQDSN) are disordered. Residues 67–74 (EQINVSGS) carry the TonB box motif. Positions 78 to 205 (SDSKTPPKIA…LGGSVIYKTK (128 aa)) constitute a TBDR plug domain. The 801-residue stretch at 213–1013 (NKDYYVSYKK…NYKMSVQFEF (801 aa)) folds into the TBDR beta-barrel domain. Positions 996–1013 (NRFYAPGRNYKMSVQFEF) match the TonB C-terminal box motif.

Belongs to the TonB-dependent receptor family. Hemoglobin/haptoglobin binding protein subfamily.

It is found in the cell outer membrane. Its function is as follows. Acts as a receptor for hemoglobin of the human host and is required for heme uptake. In Haemophilus influenzae, this protein is Hemoglobin-binding protein A (hgbA).